The following is a 78-amino-acid chain: DNA-directed RNA polymerase subunit omega (78 aa).

Belongs to the RNA polymerase subunit omega family. In terms of assembly, the RNAP catalytic core consists of 2 alpha, 1 beta, 1 beta' and 1 omega subunit. When a sigma factor is associated with the core the holoenzyme is formed, which can initiate transcription.

The catalysed reaction is RNA(n) + a ribonucleoside 5'-triphosphate = RNA(n+1) + diphosphate. Promotes RNA polymerase assembly. Latches the N- and C-terminal regions of the beta' subunit thereby facilitating its interaction with the beta and alpha subunits. The protein is DNA-directed RNA polymerase subunit omega of Desulfovibrio desulfuricans (strain ATCC 27774 / DSM 6949 / MB).